We begin with the raw amino-acid sequence, 59 residues long: Putative potassium channel toxin Ts22 (59 aa).

Positions Met1–Gln22 are cleaved as a signal peptide. Cystine bridges form between Cys29-Cys50, Cys35-Cys55, and Cys39-Cys57.

It belongs to the short scorpion toxin superfamily. Potassium channel inhibitor family. Alpha-KTx 04 subfamily. Expressed by the venom gland.

The protein localises to the secreted. In terms of biological role, potently blocks voltage-gated potassium channels (Kv). This chain is Putative potassium channel toxin Ts22, found in Tityus serrulatus (Brazilian scorpion).